The sequence spans 689 residues: Pyocin-S2 (689 aa).

Zn(2+) is bound by residues H656, H681, and H685.

This sequence belongs to the colicin/pyosin nuclease family. In terms of assembly, purified pyocin S2 makes up a complex of the two (large and small) proteins. The large protein, but not the pyocin complex, shows in vitro DNase activity.

Functionally, causes breakdown of chromosomal DNA as well as complete inhibition of lipid synthesis in sensitive cells. The polypeptide is Pyocin-S2 (pys2) (Pseudomonas aeruginosa (strain ATCC 15692 / DSM 22644 / CIP 104116 / JCM 14847 / LMG 12228 / 1C / PRS 101 / PAO1)).